The sequence spans 321 residues: Glucokinase (321 aa).

8 to 13 (GDVGGT) provides a ligand contact to ATP.

This sequence belongs to the bacterial glucokinase family.

The protein localises to the cytoplasm. It catalyses the reaction D-glucose + ATP = D-glucose 6-phosphate + ADP + H(+). This is Glucokinase from Salmonella typhi.